Here is a 286-residue protein sequence, read N- to C-terminus: tRNA (guanine-N(7)-)-methyltransferase (286 aa).

Residues 1-21 are disordered; the sequence is MTNPESTAIDPVAAMGTDHTE. Residues Glu-91, Glu-116, Asn-143, and Asp-165 each coordinate S-adenosyl-L-methionine. The active site involves Asp-165. Substrate contacts are provided by residues Lys-169, Asp-201, and 262–265; that span reads TNFE.

This sequence belongs to the class I-like SAM-binding methyltransferase superfamily. TrmB family.

It carries out the reaction guanosine(46) in tRNA + S-adenosyl-L-methionine = N(7)-methylguanosine(46) in tRNA + S-adenosyl-L-homocysteine. Its pathway is tRNA modification; N(7)-methylguanine-tRNA biosynthesis. Its function is as follows. Catalyzes the formation of N(7)-methylguanine at position 46 (m7G46) in tRNA. This Bifidobacterium longum (strain NCC 2705) protein is tRNA (guanine-N(7)-)-methyltransferase.